Consider the following 270-residue polypeptide: MRIALGIQYDGAAFCGWQAQPHGNTVQDALERALAEFARVPLHTTVAGRTDTGVHGLGQVVHFDTELDRADFSWVRGTNAFLPPTVAVQWAKSMPDAFHARFSAFERTYYYALYVHPVRSPMLDGRAGWIHTPLDDDAMRAAAAHLLGEHDFSAFRSSECQSKTPVKHLYEIDIRRVGHFLHFRFRANAFLHHMVRNLMGCLVAVGRGRYPADWVADVLAGRDRNRAAPTFMADGLYLAHVGYPAEFAVPPAQLGSVPWSSVWADLDPQP.

Asp-51 serves as the catalytic Nucleophile. Tyr-109 provides a ligand contact to substrate.

This sequence belongs to the tRNA pseudouridine synthase TruA family. As to quaternary structure, homodimer.

It catalyses the reaction uridine(38/39/40) in tRNA = pseudouridine(38/39/40) in tRNA. Functionally, formation of pseudouridine at positions 38, 39 and 40 in the anticodon stem and loop of transfer RNAs. The polypeptide is tRNA pseudouridine synthase A (Burkholderia multivorans (strain ATCC 17616 / 249)).